The following is a 128-amino-acid chain: Glycine cleavage system H protein (128 aa).

Residues 23-105 form the Lipoyl-binding domain; that stretch reads KVRIGITDFA…YEKAWMIVVE (83 aa). Lys64 carries the N6-lipoyllysine modification.

Belongs to the GcvH family. The glycine cleavage system is composed of four proteins: P, T, L and H. It depends on (R)-lipoate as a cofactor.

In terms of biological role, the glycine cleavage system catalyzes the degradation of glycine. The H protein shuttles the methylamine group of glycine from the P protein to the T protein. Functionally, is also involved in protein lipoylation via its role as an octanoyl/lipoyl carrier protein intermediate. This chain is Glycine cleavage system H protein, found in Halalkalibacterium halodurans (strain ATCC BAA-125 / DSM 18197 / FERM 7344 / JCM 9153 / C-125) (Bacillus halodurans).